We begin with the raw amino-acid sequence, 96 residues long: Molybdopterin synthase sulfur carrier subunit (96 aa).

Gly96 carries the post-translational modification 1-thioglycine; alternate. Gly96 carries the glycyl adenylate; alternate modification.

The protein belongs to the MoaD family. MOCS2A subfamily. In terms of assembly, heterotetramer; composed of 2 small (MOCS2A) and 2 large (MOCS2B) subunits. Post-translationally, C-terminal thiocarboxylation occurs in 2 steps, it is first acyl-adenylated (-COAMP) via the hesA/moeB/thiF part of MOCS3, then thiocarboxylated (-COSH) via the rhodanese domain of MOCS3.

It is found in the cytoplasm. Its pathway is cofactor biosynthesis; molybdopterin biosynthesis. Acts as a sulfur carrier required for molybdopterin biosynthesis. Component of the molybdopterin synthase complex that catalyzes the conversion of precursor Z into molybdopterin by mediating the incorporation of 2 sulfur atoms into precursor Z to generate a dithiolene group. In the complex, serves as sulfur donor by being thiocarboxylated (-COSH) at its C-terminus by MOCS3. After interaction with MOCS2B, the sulfur is then transferred to precursor Z to form molybdopterin. This is Molybdopterin synthase sulfur carrier subunit from Arabidopsis thaliana (Mouse-ear cress).